A 486-amino-acid chain; its full sequence is MTTVYTLVSWLAILGYWLLIAGVTLRILMKRRAVPSAMAWLLIIYILPLVGIIAYLAVGELHLGKRRAERARAMWPSTAKWLNDLKACKHIFAEENSSVAAPLFKLCERRQGIAGVKGNQLQLMTESDDVMQALIRDIQLARHNIEIVFYIWQPGGMADQVAESLMAAARRGIHCRLMLDSAGSVAFFRSPWPELMRNAGIEVVEALKVNLMRVFLRRMDLRQHRKMIMIDNYIAYTGSMNMVDPRYFKQDAGVGQWIDLMARMEGPIATAMGIIYSCDWEIETGKRILPPPPDVNIMPFEQASGHTIHTIASGPGFPEDLIHQALLTAAYSAREYLIMTTPYFVPSDDLLHAICTAAQRGVDVSIILPRKNDSMLVGWASRAFFTELLAAGVKIYQFEGGLLHTKSVLVDGELSLVGTVNLDMRSLWLNFEITLAIDDKGFGADLAAVQDDYISRSRLLDARLWLKRPLWQRVAERLFYFFSPLL.

2 consecutive transmembrane segments (helical) span residues 3-23 (TVYT…IAGV) and 38-58 (MAWL…YLAV). PLD phosphodiesterase domains follow at residues 219–246 (MDLR…VDPR) and 399–426 (EGGL…DMRS). Catalysis depends on residues His224, Lys226, Asp231, His404, Lys406, and Asp411.

It belongs to the phospholipase D family. Cardiolipin synthase subfamily. ClsA sub-subfamily.

It localises to the cell inner membrane. The enzyme catalyses 2 a 1,2-diacyl-sn-glycero-3-phospho-(1'-sn-glycerol) = a cardiolipin + glycerol. In terms of biological role, catalyzes the reversible phosphatidyl group transfer from one phosphatidylglycerol molecule to another to form cardiolipin (CL) (diphosphatidylglycerol) and glycerol. The polypeptide is Cardiolipin synthase A (Shigella boydii serotype 4 (strain Sb227)).